Consider the following 79-residue polypeptide: D-alanyl carrier protein (79 aa).

The 77-residue stretch at 1-77 (MDTKQGVLDI…KIVAKVESLE (77 aa)) folds into the Carrier domain. Ser-35 is subject to O-(pantetheine 4'-phosphoryl)serine.

It belongs to the DltC family. Post-translationally, 4'-phosphopantetheine is transferred from CoA to a specific serine of apo-DCP.

The protein resides in the cytoplasm. It functions in the pathway cell wall biogenesis; lipoteichoic acid biosynthesis. Carrier protein involved in the D-alanylation of lipoteichoic acid (LTA). The loading of thioester-linked D-alanine onto DltC is catalyzed by D-alanine--D-alanyl carrier protein ligase DltA. The DltC-carried D-alanyl group is further transferred to cell membrane phosphatidylglycerol (PG) by forming an ester bond, probably catalyzed by DltD. D-alanylation of LTA plays an important role in modulating the properties of the cell wall in Gram-positive bacteria, influencing the net charge of the cell wall. In Lactobacillus helveticus (strain DPC 4571), this protein is D-alanyl carrier protein.